We begin with the raw amino-acid sequence, 113 residues long: U11-theraphotoxin-Hhn1g (113 aa).

The N-terminal stretch at Met-1–Ala-21 is a signal peptide. Positions Asp-22–Arg-74 are excised as a propeptide. A disordered region spans residues Glu-61 to Asp-83. Disulfide bonds link Cys-75/Cys-90, Cys-82/Cys-95, and Cys-89/Cys-110.

This sequence belongs to the neurotoxin 14 (magi-1) family. 01 (HNTX-16) subfamily. Expressed by the venom gland.

It localises to the secreted. Its function is as follows. Probable ion channel inhibitor. This is U11-theraphotoxin-Hhn1g from Cyriopagopus hainanus (Chinese bird spider).